The chain runs to 215 residues: Large ribosomal subunit protein uL3 (215 aa).

The segment at 136–155 (GVSISHRSHGSTGQRQDPGK) is disordered. Position 151 is an N5-methylglutamine (Q151).

Belongs to the universal ribosomal protein uL3 family. In terms of assembly, part of the 50S ribosomal subunit. Forms a cluster with proteins L14 and L19. Post-translationally, methylated by PrmB.

Functionally, one of the primary rRNA binding proteins, it binds directly near the 3'-end of the 23S rRNA, where it nucleates assembly of the 50S subunit. This is Large ribosomal subunit protein uL3 from Rickettsia typhi (strain ATCC VR-144 / Wilmington).